Reading from the N-terminus, the 120-residue chain is Probable early E4 13 kDa protein (120 aa).

The chain is Probable early E4 13 kDa protein from Human adenovirus A serotype 12 (HAdV-12).